A 371-amino-acid chain; its full sequence is Phospholipid-transporting ATPase accessory subunit ivn1 (371 aa).

Over 1–39 the chain is Cytoplasmic; sequence MSQTEIVKKPKHKRFKRPDKSRFVQQTLPAWQFIFTPWT. Residues 40-60 form a helical membrane-spanning segment; that stretch reads VLPLLFLLGIVFAPLGAGMFV. The Extracellular segment spans residues 61–325; the sequence is ASRRVKELRI…STTSVIGGKN (265 aa). 2 disulfides stabilise this stretch: cysteine 75/cysteine 111 and cysteine 166/cysteine 181. The N-linked (GlcNAc...) asparagine glycan is linked to asparagine 99. 6 N-linked (GlcNAc...) asparagine glycosylation sites follow: asparagine 190, asparagine 212, asparagine 216, asparagine 233, asparagine 284, and asparagine 297. Residues 326–346 traverse the membrane as a helical segment; that stretch reads YFLGILYFVIGGLCAASGVIL. Topologically, residues 347-371 are cytoplasmic; the sequence is SIACLIKPRRVGDPRYLSWNRGKSS.

This sequence belongs to the CDC50/LEM3 family.

The protein localises to the endoplasmic reticulum membrane. Functionally, accessory component of a P4-ATPase flippase complex which catalyzes the hydrolysis of ATP coupled to the transport of aminophospholipids from the lumenal to the cytosolic leaflet of membranes and ensures the maintenance of asymmetric distribution of phospholipids. The polypeptide is Phospholipid-transporting ATPase accessory subunit ivn1 (ivn1) (Schizosaccharomyces pombe (strain 972 / ATCC 24843) (Fission yeast)).